The following is a 371-amino-acid chain: Phosphate acyltransferase (371 aa).

This sequence belongs to the PlsX family. As to quaternary structure, homodimer. Probably interacts with PlsY.

The protein resides in the cytoplasm. It carries out the reaction a fatty acyl-[ACP] + phosphate = an acyl phosphate + holo-[ACP]. Its pathway is lipid metabolism; phospholipid metabolism. Catalyzes the reversible formation of acyl-phosphate (acyl-PO(4)) from acyl-[acyl-carrier-protein] (acyl-ACP). This enzyme utilizes acyl-ACP as fatty acyl donor, but not acyl-CoA. The sequence is that of Phosphate acyltransferase from Polaromonas sp. (strain JS666 / ATCC BAA-500).